The sequence spans 910 residues: DNA mismatch repair protein MutS (910 aa).

Residues 1–11 are compositionally biased toward basic and acidic residues; that stretch reads MEAKVEEKEPE. The disordered stretch occupies residues 1–21; the sequence is MEAKVEEKEPEPVENAGPDAP. Residue 658 to 665 coordinates ATP; sequence GPNMGGKS.

This sequence belongs to the DNA mismatch repair MutS family.

Functionally, this protein is involved in the repair of mismatches in DNA. It is possible that it carries out the mismatch recognition step. This protein has a weak ATPase activity. In Brucella melitensis biotype 1 (strain ATCC 23456 / CCUG 17765 / NCTC 10094 / 16M), this protein is DNA mismatch repair protein MutS.